A 561-amino-acid chain; its full sequence is TBC1 domain family member 24 (561 aa).

K36 and R40 together coordinate a 1,2-diacyl-sn-glycero-3-phospho-(1D-myo-inositol). Residues 45 to 236 (AQSHTLRGKV…RVFDVFLVEG (192 aa)) enclose the Rab-GAP TBC domain. Residues K238, R242, and 293-297 (RLFSR) contribute to the a 1,2-diacyl-sn-glycero-3-phospho-(1D-myo-inositol) site. Positions 343–556 (EIVSVKEMRD…IAAVEAWGFQ (214 aa)) constitute a TLDc domain. A phosphoserine mark is found at S475 and S482.

In terms of assembly, interacts with ARF6. Expressed in brain, particularly at the level of the cortex and the hippocampus. Expressed in the inner ear in spiral ganglion cells, a collection of neurons critical for hearing and balance.

It is found in the cell membrane. It localises to the cytoplasm. The protein resides in the cytoplasmic vesicle membrane. Its subcellular location is the presynapse. May act as a GTPase-activating protein for Rab family protein(s). Involved in neuronal projections development, probably through a negative modulation of ARF6 function. Involved in the regulation of synaptic vesicle trafficking. The sequence is that of TBC1 domain family member 24 (Tbc1d24) from Mus musculus (Mouse).